Consider the following 465-residue polypeptide: Methylenetetrahydrofolate--tRNA-(uracil-5-)-methyltransferase TrmFO (465 aa).

Gly-3–Gly-8 provides a ligand contact to FAD.

Belongs to the MnmG family. TrmFO subfamily. It depends on FAD as a cofactor.

Its subcellular location is the cytoplasm. It catalyses the reaction uridine(54) in tRNA + (6R)-5,10-methylene-5,6,7,8-tetrahydrofolate + NADH + H(+) = 5-methyluridine(54) in tRNA + (6S)-5,6,7,8-tetrahydrofolate + NAD(+). It carries out the reaction uridine(54) in tRNA + (6R)-5,10-methylene-5,6,7,8-tetrahydrofolate + NADPH + H(+) = 5-methyluridine(54) in tRNA + (6S)-5,6,7,8-tetrahydrofolate + NADP(+). Catalyzes the folate-dependent formation of 5-methyl-uridine at position 54 (M-5-U54) in all tRNAs. The protein is Methylenetetrahydrofolate--tRNA-(uracil-5-)-methyltransferase TrmFO of Bradyrhizobium sp. (strain BTAi1 / ATCC BAA-1182).